An 804-amino-acid chain; its full sequence is Leucine--tRNA ligase (804 aa).

Residues 39–50 (PYPSGAGLHVGH) carry the 'HIGH' region motif. The 'KMSKS' region signature appears at 580–584 (KMSKS). Lys583 lines the ATP pocket.

Belongs to the class-I aminoacyl-tRNA synthetase family.

It is found in the cytoplasm. It carries out the reaction tRNA(Leu) + L-leucine + ATP = L-leucyl-tRNA(Leu) + AMP + diphosphate. The protein is Leucine--tRNA ligase of Mycoplasma capricolum subsp. capricolum (strain California kid / ATCC 27343 / NCTC 10154).